Consider the following 309-residue polypeptide: Protein FdhE homolog (309 aa).

The interval 1-22 (MSIRIVPQEQLEQNGKSTPEGH) is disordered.

The protein belongs to the FdhE family.

It localises to the cytoplasm. Its function is as follows. Necessary for formate dehydrogenase activity. This is Protein FdhE homolog from Pectobacterium carotovorum subsp. carotovorum (strain PC1).